Here is a 290-residue protein sequence, read N- to C-terminus: Phosphoribulokinase (290 aa).

12-20 (GSSGAGTTS) serves as a coordination point for ATP.

This sequence belongs to the phosphoribulokinase family.

The catalysed reaction is D-ribulose 5-phosphate + ATP = D-ribulose 1,5-bisphosphate + ADP + H(+). It functions in the pathway carbohydrate biosynthesis; Calvin cycle. This is Phosphoribulokinase (cbbP) from Nitrobacter vulgaris.